A 170-amino-acid chain; its full sequence is Large ribosomal subunit protein bL17 (170 aa).

The segment covering Ala-124–Ala-134 has biased composition (low complexity). Residues Ala-124–Asn-170 are disordered. Composition is skewed to basic and acidic residues over residues Pro-135–Ala-148 and Pro-156–Asn-170.

The protein belongs to the bacterial ribosomal protein bL17 family. In terms of assembly, part of the 50S ribosomal subunit. Contacts protein L32.

This is Large ribosomal subunit protein bL17 from Desulfovibrio desulfuricans (strain ATCC 27774 / DSM 6949 / MB).